The primary structure comprises 163 residues: 6,7-dimethyl-8-ribityllumazine synthase 1 (163 aa).

5-amino-6-(D-ribitylamino)uracil is bound by residues phenylalanine 27, 58 to 60 (ALE), and 87 to 89 (CVV). 92 to 93 (ET) contributes to the (2S)-2-hydroxy-3-oxobutyl phosphate binding site. The active-site Proton donor is histidine 95. A 5-amino-6-(D-ribitylamino)uracil-binding site is contributed by asparagine 120. Arginine 134 contacts (2S)-2-hydroxy-3-oxobutyl phosphate.

It belongs to the DMRL synthase family.

The catalysed reaction is (2S)-2-hydroxy-3-oxobutyl phosphate + 5-amino-6-(D-ribitylamino)uracil = 6,7-dimethyl-8-(1-D-ribityl)lumazine + phosphate + 2 H2O + H(+). It participates in cofactor biosynthesis; riboflavin biosynthesis; riboflavin from 2-hydroxy-3-oxobutyl phosphate and 5-amino-6-(D-ribitylamino)uracil: step 1/2. In terms of biological role, catalyzes the formation of 6,7-dimethyl-8-ribityllumazine by condensation of 5-amino-6-(D-ribitylamino)uracil with 3,4-dihydroxy-2-butanone 4-phosphate. This is the penultimate step in the biosynthesis of riboflavin. The sequence is that of 6,7-dimethyl-8-ribityllumazine synthase 1 from Rhodopseudomonas palustris (strain ATCC BAA-98 / CGA009).